A 130-amino-acid chain; its full sequence is Protachykinin-1 (130 aa).

The first 19 residues, 1–19 (MKILVAVAVFFLVSTQLFA), serve as a signal peptide directing secretion. Residues 20–56 (EEIDANDDLNYWSDWSDSDQIKEAMPEPFEHLLQRIA) constitute a propeptide that is removed on maturation. Residues Met-68 and Met-107 each carry the methionine amide modification.

The protein belongs to the tachykinin family. In terms of processing, the substance P form is cleaved at Pro-59 by the prolyl endopeptidase FAP (seprase) activity (in vitro). Substance P is also cleaved and degraded by Angiotensin-converting enzyme (ACE) and neprilysin (MME).

It localises to the secreted. Functionally, tachykinins are active peptides which excite neurons, evoke behavioral responses, are potent vasodilators and secretagogues, and contract (directly or indirectly) many smooth muscles. This is Protachykinin-1 (Tac1) from Mus musculus (Mouse).